The following is a 143-amino-acid chain: Large ribosomal subunit protein uL11 (143 aa).

Belongs to the universal ribosomal protein uL11 family. Part of the ribosomal stalk of the 50S ribosomal subunit. Interacts with L10 and the large rRNA to form the base of the stalk. L10 forms an elongated spine to which L12 dimers bind in a sequential fashion forming a multimeric L10(L12)X complex. In terms of processing, one or more lysine residues are methylated.

In terms of biological role, forms part of the ribosomal stalk which helps the ribosome interact with GTP-bound translation factors. This Teredinibacter turnerae (strain ATCC 39867 / T7901) protein is Large ribosomal subunit protein uL11.